A 933-amino-acid chain; its full sequence is C-1-tetrahydrofolate synthase, cytoplasmic (933 aa).

The methylenetetrahydrofolate dehydrogenase and cyclohydrolase stretch occupies residues methionine 1 to leucine 303. Residues tyrosine 51–lysine 55 and valine 98–methionine 100 contribute to the substrate site. NADP(+)-binding positions include glycine 170–serine 172 and serine 195. Substrate is bound at residue proline 270–glycine 274. Residues arginine 304–phenylalanine 933 are formyltetrahydrofolate synthetase. Residue threonine 378 to serine 385 participates in ATP binding.

The protein in the N-terminal section; belongs to the tetrahydrofolate dehydrogenase/cyclohydrolase family. It in the C-terminal section; belongs to the formate--tetrahydrofolate ligase family. In terms of assembly, homodimer.

The protein resides in the cytoplasm. It carries out the reaction (6R)-5,10-methylene-5,6,7,8-tetrahydrofolate + NADP(+) = (6R)-5,10-methenyltetrahydrofolate + NADPH. The catalysed reaction is (6R)-5,10-methenyltetrahydrofolate + H2O = (6R)-10-formyltetrahydrofolate + H(+). The enzyme catalyses (6S)-5,6,7,8-tetrahydrofolate + formate + ATP = (6R)-10-formyltetrahydrofolate + ADP + phosphate. The protein operates within one-carbon metabolism; tetrahydrofolate interconversion. The sequence is that of C-1-tetrahydrofolate synthase, cytoplasmic from Spodoptera frugiperda (Fall armyworm).